The following is a 258-amino-acid chain: Imidazole glycerol phosphate synthase subunit HisF (258 aa).

Residues D12 and D131 contribute to the active site.

The protein belongs to the HisA/HisF family. In terms of assembly, heterodimer of HisH and HisF.

The protein resides in the cytoplasm. The catalysed reaction is 5-[(5-phospho-1-deoxy-D-ribulos-1-ylimino)methylamino]-1-(5-phospho-beta-D-ribosyl)imidazole-4-carboxamide + L-glutamine = D-erythro-1-(imidazol-4-yl)glycerol 3-phosphate + 5-amino-1-(5-phospho-beta-D-ribosyl)imidazole-4-carboxamide + L-glutamate + H(+). It participates in amino-acid biosynthesis; L-histidine biosynthesis; L-histidine from 5-phospho-alpha-D-ribose 1-diphosphate: step 5/9. Functionally, IGPS catalyzes the conversion of PRFAR and glutamine to IGP, AICAR and glutamate. The HisF subunit catalyzes the cyclization activity that produces IGP and AICAR from PRFAR using the ammonia provided by the HisH subunit. This is Imidazole glycerol phosphate synthase subunit HisF from Nitrosomonas eutropha (strain DSM 101675 / C91 / Nm57).